Reading from the N-terminus, the 175-residue chain is MTRIFLIGYMGAGKTTLGKAFAREMSLNFIDLDWFIEERFHKTVQQLFLERGEDGFRELERKMLHEVAEFEDVVVSTGGGTPCFFDNMEYMNDCGDTVFLDVEPAVLFRRLRVAKQQRPLLANKSDEELMDFICEALQKRHPFYSKAKHLFKADELEDKRQIQASVDSLRKKLNK.

11-16 (GAGKTT) is a binding site for ATP. A Mg(2+)-binding site is contributed by threonine 15. Substrate is bound by residues aspartate 33, arginine 57, and glycine 79. Position 118 (arginine 118) interacts with ATP. Residue arginine 140 coordinates substrate.

The protein belongs to the shikimate kinase family. As to quaternary structure, monomer. It depends on Mg(2+) as a cofactor.

It localises to the cytoplasm. It catalyses the reaction shikimate + ATP = 3-phosphoshikimate + ADP + H(+). It participates in metabolic intermediate biosynthesis; chorismate biosynthesis; chorismate from D-erythrose 4-phosphate and phosphoenolpyruvate: step 5/7. Functionally, catalyzes the specific phosphorylation of the 3-hydroxyl group of shikimic acid using ATP as a cosubstrate. This is Shikimate kinase from Phocaeicola vulgatus (strain ATCC 8482 / DSM 1447 / JCM 5826 / CCUG 4940 / NBRC 14291 / NCTC 11154) (Bacteroides vulgatus).